The primary structure comprises 360 residues: CLIP domain-containing serine protease B4 (360 aa).

A signal peptide spans 1–24; it reads MIGNRVINLLIVATLALAGQTVLA. Residues 30-83 form the Clip domain; the sequence is DCVNPVGEAGKCVLFRECQPLVDIYNKPVNTPDDTQFLTESRCGLYERKTLVCC. 4 disulfides stabilise this stretch: Cys-31–Cys-82, Cys-41–Cys-72, Cys-47–Cys-83, and Cys-138–Cys-154. Residues 108 to 360 enclose the Peptidase S1 domain; sequence VIGGQPTKID…YVDWIKDNIY (253 aa). Catalysis depends on charge relay system residues His-153 and Asp-213. N-linked (GlcNAc...) asparagine glycosylation occurs at Asn-224. 2 disulfide bridges follow: Cys-280-Cys-297 and Cys-307-Cys-336. Ser-311 acts as the Charge relay system in catalysis.

The protein belongs to the peptidase S1 family. CLIP subfamily. In terms of assembly, interacts with SRPN2 in the hemolymph of immune-challenged female mosquitoes; the interaction results in CLIPB4 inhibition. As to expression, in females, expressed in fat body, cuticle, thorax and ovaries.

It is found in the secreted. Its function is as follows. Serine protease which plays a role in the innate immune response against protozoan and bacterial pathogens, such as Plasmodium bergei, Staphylococcus aureus, Micrococcus luteus and Escherichia coli, by activating the melanization cascade. Cleaves and activates CLIPB8. In the resistant strain L3-5, involved in the melanization of killed parasite P.berghei ookinetes which results in their clearance. In the susceptible strain G3, appears to be dispensable for ookinete elimination which occurs by lysis. This is CLIP domain-containing serine protease B4 from Anopheles gambiae (African malaria mosquito).